The primary structure comprises 204 residues: Glycerol-3-phosphate acyltransferase (204 aa).

Helical transmembrane passes span 8 to 28 (ILIF…CYIF), 53 to 73 (VPAA…VVIA), 81 to 101 (FITA…IFFG), 116 to 136 (FGFS…VAII), and 155 to 175 (VIFT…IIIL).

This sequence belongs to the PlsY family. In terms of assembly, probably interacts with PlsX.

Its subcellular location is the cell inner membrane. It catalyses the reaction an acyl phosphate + sn-glycerol 3-phosphate = a 1-acyl-sn-glycero-3-phosphate + phosphate. It functions in the pathway lipid metabolism; phospholipid metabolism. In terms of biological role, catalyzes the transfer of an acyl group from acyl-phosphate (acyl-PO(4)) to glycerol-3-phosphate (G3P) to form lysophosphatidic acid (LPA). This enzyme utilizes acyl-phosphate as fatty acyl donor, but not acyl-CoA or acyl-ACP. The polypeptide is Glycerol-3-phosphate acyltransferase (Francisella tularensis subsp. holarctica (strain FTNF002-00 / FTA)).